The chain runs to 431 residues: Serine--tRNA ligase (431 aa).

237–239 (TAE) serves as a coordination point for L-serine. 268–270 (RSE) is a binding site for ATP. Glu291 lines the L-serine pocket. Position 355-358 (355-358 (EISS)) interacts with ATP. Ser390 serves as a coordination point for L-serine.

It belongs to the class-II aminoacyl-tRNA synthetase family. Type-1 seryl-tRNA synthetase subfamily. As to quaternary structure, homodimer. The tRNA molecule binds across the dimer.

Its subcellular location is the cytoplasm. The catalysed reaction is tRNA(Ser) + L-serine + ATP = L-seryl-tRNA(Ser) + AMP + diphosphate + H(+). The enzyme catalyses tRNA(Sec) + L-serine + ATP = L-seryl-tRNA(Sec) + AMP + diphosphate + H(+). It functions in the pathway aminoacyl-tRNA biosynthesis; selenocysteinyl-tRNA(Sec) biosynthesis; L-seryl-tRNA(Sec) from L-serine and tRNA(Sec): step 1/1. Its function is as follows. Catalyzes the attachment of serine to tRNA(Ser). Is also able to aminoacylate tRNA(Sec) with serine, to form the misacylated tRNA L-seryl-tRNA(Sec), which will be further converted into selenocysteinyl-tRNA(Sec). This is Serine--tRNA ligase from Neisseria meningitidis serogroup A / serotype 4A (strain DSM 15465 / Z2491).